Reading from the N-terminus, the 462-residue chain is Zinc transporter 6-B (462 aa).

The Cytoplasmic segment spans residues 1–33 (MGTIYLFRKTQRSLLGKLTQEFRLVTADRRSWK). The helical transmembrane segment at 34 to 54 (ILLFGAINVVCTGFLLTWCSS) threads the bilayer. At 55 to 64 (TNSMALTAYT) the chain is on the extracellular side. The chain crosses the membrane as a helical span at residues 65-85 (YLTIFDLFSLITSLISYWVMM). Over 86–98 (KKPSPTYSFGFER) the chain is Cytoplasmic. A helical membrane pass occupies residues 99–119 (LEVLAVFASTVLAQLGALFIL). Topologically, residues 120–134 (KESAERFLEQPEIHT) are extracellular. A helical transmembrane segment spans residues 135-155 (GRLLVGTFVALFFNLFTMLSI). Over 156–200 (RNKPFAYVSEAASTSWLQEHVADLSRSLCGVIPGLSSIFLPRMNP) the chain is Cytoplasmic. A helical transmembrane segment spans residues 201-221 (FVLIDIAGALALCITYMLIEI). At 222–223 (NN) the chain is on the extracellular side. Residues 224–244 (YFAVDTASAIAIAVMTFGTMY) traverse the membrane as a helical segment. The Cytoplasmic segment spans residues 245–462 (PMSVYSGKVL…TPGQFTQFRQ (218 aa)).

This sequence belongs to the cation diffusion facilitator (CDF) transporter (TC 2.A.4) family. SLC30A subfamily. As to quaternary structure, heterodimer with SLC30A5; form a functional zinc ion transmembrane transporter.

Its subcellular location is the golgi apparatus. The protein resides in the trans-Golgi network membrane. In terms of biological role, has probably no intrinsic transporter activity but together with SLC30A5 forms a functional zinc ion:proton antiporter heterodimer, mediating zinc entry into the lumen of organelles along the secretory pathway. As part of that zinc ion:proton antiporter, contributes to zinc ion homeostasis within the early secretory pathway and regulates the activation and folding of enzymes like alkaline phosphatases and enzymes involved in phosphatidylinositol glycan anchor biosynthesis. The polypeptide is Zinc transporter 6-B (slc30a6-b) (Xenopus laevis (African clawed frog)).